Consider the following 97-residue polypeptide: Large ribosomal subunit protein bL28 (97 aa).

Belongs to the bacterial ribosomal protein bL28 family.

This chain is Large ribosomal subunit protein bL28, found in Rickettsia canadensis (strain McKiel).